Reading from the N-terminus, the 1137-residue chain is 2'-5'-oligoadenylate synthase 3 (1137 aa).

Met1 is subject to N-acetylmethionine. The tract at residues 6 to 341 (TPAGALDKLV…GALVQPWEGP (336 aa)) is OAS domain 1. Interaction with dsRNA stretches follow at residues 12–56 (DKLV…VIRI) and 185–199 (ELRK…VKLK). Positions 342-461 (GLPCAGILDL…GSQMGPDLSQ (120 aa)) are linker. Positions 434–453 (QSTASSNTPPGHSSMSTAGS) are enriched in polar residues. The segment at 434-462 (QSTASSNTPPGHSSMSTAGSQMGPDLSQI) is disordered. OAS domain stretches follow at residues 462-792 (IPSK…PWDV) and 800-1134 (TPAQ…WPVK). An ATP-binding site is contributed by Ser854. Mg(2+) contacts are provided by Asp866, Asp868, and Asp938. ATP-binding residues include Arg997, Lys1000, and Gln1019.

This sequence belongs to the 2-5A synthase family. As to quaternary structure, monomer. Mg(2+) is required as a cofactor.

The protein localises to the cytoplasm. Its subcellular location is the nucleus. It carries out the reaction 3 ATP = 5'-triphosphoadenylyl-(2'-&gt;5')-adenylyl-(2'-&gt;5')-adenosine + 2 diphosphate. Its activity is regulated as follows. Produced as a latent enzyme which is activated by dsRNA generated during the course of viral infection. Strongly activated by long dsRNAs at least 50 nucleotides in length. ssRNA does not activate the enzyme. Functionally, interferon-induced, dsRNA-activated antiviral enzyme which plays a critical role in cellular innate antiviral response. In addition, it may also play a role in other cellular processes such as apoptosis, cell growth, differentiation and gene regulation. Synthesizes preferentially dimers of 2'-5'-oligoadenylates (2-5A) from ATP which then bind to the inactive monomeric form of ribonuclease L (RNase L) leading to its dimerization and subsequent activation. Activation of RNase L leads to degradation of cellular as well as viral RNA, resulting in the inhibition of protein synthesis, thus terminating viral replication. Can mediate the antiviral effect via the classical RNase L-dependent pathway or an alternative antiviral pathway independent of RNase L. This chain is 2'-5'-oligoadenylate synthase 3 (Oas3), found in Rattus norvegicus (Rat).